We begin with the raw amino-acid sequence, 241 residues long: Lysoplasmalogenase TMEM86A (241 aa).

Over 1–13 (MVSPVTVVKSEGP) the chain is Cytoplasmic. The chain crosses the membrane as a helical span at residues 14–30 (KLVPFFKATCVYFVLWL). Residues 31–36 (PSSSPS) lie on the Extracellular side of the membrane. The chain crosses the membrane as a helical span at residues 37–59 (WVSALIKCLPIFCLWLFLLAHGV). Over 60–67 (RFLLAHPS) the chain is Cytoplasmic. Residues 68 to 87 (ASLIFVGLVFSAVGDAFLIW) form a helical membrane-spanning segment. Over 88 to 96 (QDHGYFEHG) the chain is Extracellular. Residues 97-113 (LLMFAVAHILYAAAFGM) traverse the membrane as a helical segment. Over 114 to 119 (RPLALR) the chain is Cytoplasmic. The helical transmembrane segment at 120–136 (TGLVIGVLSGLCYALLY) threads the bilayer. The Extracellular portion of the chain corresponds to 137-142 (PGLSGA). Residues 143–159 (FTYLVGVYVALISFMGW) traverse the membrane as a helical segment. At 160 to 176 (RAMAGLRLVGAAWRWTE) the chain is on the cytoplasmic side. The chain crosses the membrane as a helical span at residues 177–195 (LAAGGGALLFILSDLTIAL). Residues 196-206 (NKFCFPVPYSR) are Extracellular-facing. The chain crosses the membrane as a helical span at residues 207–225 (ALIMSTYYAAQMLIALSAV). Residues 226 to 241 (ESREPVGEDYRLSKAD) lie on the Cytoplasmic side of the membrane.

The protein belongs to the TMEM86 family. In terms of tissue distribution, highly expressed in the jejunum, white adipose tissue, kidney and macrophages.

It localises to the endoplasmic reticulum membrane. The enzyme catalyses a 1-O-(1Z-alkenyl)-sn-glycero-3-phosphocholine + H2O = a 2,3-saturated aldehyde + sn-glycerol 3-phosphocholine. It carries out the reaction a 1-O-(1Z-alkenyl)-sn-glycero-3-phosphoethanolamine + H2O = a 2,3-saturated aldehyde + sn-glycero-3-phosphoethanolamine. Its function is as follows. Catalyzes the hydrolysis of the vinyl ether bond of choline or ethanolamine lysoplasmalogens, forming fatty aldehyde and glycerophosphocholine or glycerophosphoethanolamine, respectively and is specific for the sn-2-deacylated (lyso) form of plasmalogen. Plays an important role in lysoplasmalogen metabolism in the adipocyte tissue and macrophages. The protein is Lysoplasmalogenase TMEM86A (Tmem86a) of Mus musculus (Mouse).